The following is a 359-amino-acid chain: UDP-3-O-acylglucosamine N-acyltransferase (359 aa).

The active-site Proton acceptor is His256.

Belongs to the transferase hexapeptide repeat family. LpxD subfamily. As to quaternary structure, homotrimer.

It carries out the reaction a UDP-3-O-[(3R)-3-hydroxyacyl]-alpha-D-glucosamine + a (3R)-hydroxyacyl-[ACP] = a UDP-2-N,3-O-bis[(3R)-3-hydroxyacyl]-alpha-D-glucosamine + holo-[ACP] + H(+). Its pathway is bacterial outer membrane biogenesis; LPS lipid A biosynthesis. Its function is as follows. Catalyzes the N-acylation of UDP-3-O-acylglucosamine using 3-hydroxyacyl-ACP as the acyl donor. Is involved in the biosynthesis of lipid A, a phosphorylated glycolipid that anchors the lipopolysaccharide to the outer membrane of the cell. The protein is UDP-3-O-acylglucosamine N-acyltransferase of Rhodopseudomonas palustris (strain HaA2).